The following is a 658-amino-acid chain: Phosphomethylpyrimidine synthase (658 aa).

A disordered region spans residues 1-22 (MNNSTDAVNPAKKPQTRREKRE). Substrate-binding positions include asparagine 248, methionine 277, tyrosine 306, histidine 342, 362–364 (SRG), 403–406 (DGLR), and glutamate 442. Residue histidine 446 coordinates Zn(2+). Substrate is bound at residue tyrosine 469. Position 510 (histidine 510) interacts with Zn(2+). Residues cysteine 590, cysteine 593, and cysteine 598 each contribute to the [4Fe-4S] cluster site.

The protein belongs to the ThiC family. In terms of assembly, homodimer. [4Fe-4S] cluster serves as cofactor.

The catalysed reaction is 5-amino-1-(5-phospho-beta-D-ribosyl)imidazole + S-adenosyl-L-methionine = 4-amino-2-methyl-5-(phosphooxymethyl)pyrimidine + CO + 5'-deoxyadenosine + formate + L-methionine + 3 H(+). It participates in cofactor biosynthesis; thiamine diphosphate biosynthesis. In terms of biological role, catalyzes the synthesis of the hydroxymethylpyrimidine phosphate (HMP-P) moiety of thiamine from aminoimidazole ribotide (AIR) in a radical S-adenosyl-L-methionine (SAM)-dependent reaction. This chain is Phosphomethylpyrimidine synthase, found in Colwellia psychrerythraea (strain 34H / ATCC BAA-681) (Vibrio psychroerythus).